The following is a 249-amino-acid chain: 1-(5-phosphoribosyl)-5-[(5-phosphoribosylamino)methylideneamino] imidazole-4-carboxamide isomerase (249 aa).

The Proton acceptor role is filled by aspartate 10. The Proton donor role is filled by aspartate 136.

This sequence belongs to the HisA/HisF family.

It localises to the cytoplasm. The enzyme catalyses 1-(5-phospho-beta-D-ribosyl)-5-[(5-phospho-beta-D-ribosylamino)methylideneamino]imidazole-4-carboxamide = 5-[(5-phospho-1-deoxy-D-ribulos-1-ylimino)methylamino]-1-(5-phospho-beta-D-ribosyl)imidazole-4-carboxamide. It participates in amino-acid biosynthesis; L-histidine biosynthesis; L-histidine from 5-phospho-alpha-D-ribose 1-diphosphate: step 4/9. This chain is 1-(5-phosphoribosyl)-5-[(5-phosphoribosylamino)methylideneamino] imidazole-4-carboxamide isomerase, found in Symbiobacterium thermophilum (strain DSM 24528 / JCM 14929 / IAM 14863 / T).